We begin with the raw amino-acid sequence, 244 residues long: UDP-2,3-diacylglucosamine hydrolase (244 aa).

D8, H10, D41, N79, and H114 together coordinate Mn(2+). N79 to R80 contacts substrate. Positions 122, 160, 164, 167, and 195 each coordinate substrate. Residues H195 and H197 each coordinate Mn(2+).

Belongs to the LpxH family. It depends on Mn(2+) as a cofactor.

The protein localises to the cell inner membrane. It catalyses the reaction UDP-2-N,3-O-bis[(3R)-3-hydroxytetradecanoyl]-alpha-D-glucosamine + H2O = 2-N,3-O-bis[(3R)-3-hydroxytetradecanoyl]-alpha-D-glucosaminyl 1-phosphate + UMP + 2 H(+). It participates in glycolipid biosynthesis; lipid IV(A) biosynthesis; lipid IV(A) from (3R)-3-hydroxytetradecanoyl-[acyl-carrier-protein] and UDP-N-acetyl-alpha-D-glucosamine: step 4/6. Functionally, hydrolyzes the pyrophosphate bond of UDP-2,3-diacylglucosamine to yield 2,3-diacylglucosamine 1-phosphate (lipid X) and UMP by catalyzing the attack of water at the alpha-P atom. Involved in the biosynthesis of lipid A, a phosphorylated glycolipid that anchors the lipopolysaccharide to the outer membrane of the cell. The chain is UDP-2,3-diacylglucosamine hydrolase from Marinobacter nauticus (strain ATCC 700491 / DSM 11845 / VT8) (Marinobacter aquaeolei).